The following is a 347-amino-acid chain: 3-isopropylmalate dehydrogenase (347 aa).

Positions 95, 105, 129, and 220 each coordinate substrate. Mg(2+) contacts are provided by Asp220, Asp244, and Asp248. Residue 280–292 (GSAPDIAGQGKAD) coordinates NAD(+).

Belongs to the isocitrate and isopropylmalate dehydrogenases family. LeuB type 2 subfamily. In terms of assembly, homodimer. Mg(2+) is required as a cofactor. The cofactor is Mn(2+).

It is found in the cytoplasm. It catalyses the reaction (2R,3S)-3-isopropylmalate + NAD(+) = 4-methyl-2-oxopentanoate + CO2 + NADH. It participates in amino-acid biosynthesis; L-leucine biosynthesis; L-leucine from 3-methyl-2-oxobutanoate: step 3/4. Functionally, catalyzes the oxidation of 3-carboxy-2-hydroxy-4-methylpentanoate (3-isopropylmalate) to 3-carboxy-4-methyl-2-oxopentanoate. The product decarboxylates to 4-methyl-2 oxopentanoate. The polypeptide is 3-isopropylmalate dehydrogenase (Beutenbergia cavernae (strain ATCC BAA-8 / DSM 12333 / CCUG 43141 / JCM 11478 / NBRC 16432 / NCIMB 13614 / HKI 0122)).